The sequence spans 296 residues: Ribosomal RNA small subunit methyltransferase A (296 aa).

Positions 30, 32, 57, 78, 103, and 128 each coordinate S-adenosyl-L-methionine.

Belongs to the class I-like SAM-binding methyltransferase superfamily. rRNA adenine N(6)-methyltransferase family. RsmA subfamily.

Its subcellular location is the cytoplasm. It carries out the reaction adenosine(1518)/adenosine(1519) in 16S rRNA + 4 S-adenosyl-L-methionine = N(6)-dimethyladenosine(1518)/N(6)-dimethyladenosine(1519) in 16S rRNA + 4 S-adenosyl-L-homocysteine + 4 H(+). In terms of biological role, specifically dimethylates two adjacent adenosines (A1518 and A1519) in the loop of a conserved hairpin near the 3'-end of 16S rRNA in the 30S particle. May play a critical role in biogenesis of 30S subunits. The chain is Ribosomal RNA small subunit methyltransferase A from Staphylococcus carnosus (strain TM300).